A 434-amino-acid polypeptide reads, in one-letter code: Alpha-enolase (434 aa).

Ser-40 is a binding site for Mg(2+). Substrate contacts are provided by His-158 and Glu-167. Glu-210 acts as the Proton donor in catalysis. Mg(2+) contacts are provided by Asp-245, Glu-293, and Asp-318. Substrate contacts are provided by Glu-293 and Asp-318. Catalysis depends on Lys-343, which acts as the Proton acceptor. Substrate is bound by residues 370–373 (SHRS) and Lys-394.

It belongs to the enolase family. Homodimer. Mg(2+) is required as a cofactor.

The protein resides in the cytoplasm. It catalyses the reaction (2R)-2-phosphoglycerate = phosphoenolpyruvate + H2O. It functions in the pathway carbohydrate degradation; glycolysis; pyruvate from D-glyceraldehyde 3-phosphate: step 4/5. This Python regius (Ball python) protein is Alpha-enolase.